Consider the following 467-residue polypeptide: 2-succinylbenzoate--CoA ligase (467 aa).

Belongs to the ATP-dependent AMP-binding enzyme family. MenE subfamily.

It catalyses the reaction 2-succinylbenzoate + ATP + CoA = 2-succinylbenzoyl-CoA + AMP + diphosphate. It functions in the pathway quinol/quinone metabolism; 1,4-dihydroxy-2-naphthoate biosynthesis; 1,4-dihydroxy-2-naphthoate from chorismate: step 5/7. It participates in quinol/quinone metabolism; menaquinone biosynthesis. In terms of biological role, converts 2-succinylbenzoate (OSB) to 2-succinylbenzoyl-CoA (OSB-CoA). The sequence is that of 2-succinylbenzoate--CoA ligase from Listeria innocua serovar 6a (strain ATCC BAA-680 / CLIP 11262).